Consider the following 578-residue polypeptide: Arginine--tRNA ligase (578 aa).

A 'HIGH' region motif is present at residues 123–133 (PNLAKEMHVGH).

Belongs to the class-I aminoacyl-tRNA synthetase family. As to quaternary structure, monomer.

The protein localises to the cytoplasm. The catalysed reaction is tRNA(Arg) + L-arginine + ATP = L-arginyl-tRNA(Arg) + AMP + diphosphate. This is Arginine--tRNA ligase from Hahella chejuensis (strain KCTC 2396).